The chain runs to 1607 residues: Thrombospondin type-1 domain-containing protein 7B (1607 aa).

The N-terminal stretch at 1 to 31 (MFLRSDLAVTHWVSRSMRKLFLVLSLLLSQA) is a signal peptide. Over 32–1556 (AHLEGRKDNQ…QPLDPDGRVK (1525 aa)) the chain is Extracellular. TSP type-1 domains follow at residues 40–98 (NQFL…RVCD), 102–177 (DLFQ…IPCP), 179–233 (DCVV…VSCP), 336–392 (DCET…IAEG), 399–482 (PRYS…VPCS), 484–543 (DCIV…PMCH), 601–661 (DCVV…HSCT), 662–735 (QLYW…LPCK), 737–796 (DCLV…SLCP), 797–869 (SYRW…IPCR), 871–924 (DCTF…CPCD), 925–999 (TFMS…IPCP), 1001–1126 (DCKL…LLCP), 1128–1182 (ECVM…ENCF), 1183–1246 (QFQY…VECV), 1248–1303 (NCQL…TPCY), 1304–1369 (SWVL…VPCP), and 1371–1432 (DCHI…GKCY). Residues Asn-150 and Asn-219 are each glycosylated (N-linked (GlcNAc...) asparagine). 3 disulfide bridges follow: Cys-411–Cys-477, Cys-431–Cys-481, and Cys-442–Cys-466. Disulfide bonds link Cys-602–Cys-643, Cys-613–Cys-617, and Cys-655–Cys-660. Asn-683 carries an N-linked (GlcNAc...) asparagine glycan. 3 cysteine pairs are disulfide-bonded: Cys-738-Cys-779, Cys-749-Cys-753, and Cys-789-Cys-795. An N-linked (GlcNAc...) asparagine glycan is attached at Asn-757. Asn-842 carries an N-linked (GlcNAc...) asparagine glycan. The N-linked (GlcNAc...) asparagine glycan is linked to Asn-933. 5 disulfide bridges follow: Cys-937-Cys-994, Cys-960-Cys-998, Cys-971-Cys-984, Cys-1002-Cys-1039, and Cys-1013-Cys-1017. An N-linked (GlcNAc...) asparagine glycan is attached at Asn-985. A glycan (N-linked (GlcNAc...) asparagine) is linked at Asn-1105. The cysteines at positions 1121 and 1125 are disulfide-linked. N-linked (GlcNAc...) asparagine glycans are attached at residues Asn-1187 and Asn-1199. Intrachain disulfides connect Cys-1249–Cys-1287, Cys-1260–Cys-1264, and Cys-1297–Cys-1302. Asn-1309 and Asn-1335 each carry an N-linked (GlcNAc...) asparagine glycan. 3 disulfides stabilise this stretch: Cys-1372–Cys-1416, Cys-1383–Cys-1387, and Cys-1426–Cys-1431. 2 N-linked (GlcNAc...) asparagine glycosylation sites follow: Asn-1457 and Asn-1525. A helical transmembrane segment spans residues 1557–1577 (MWVYGVSGGSFLIMIFLVFTS). At 1578 to 1607 (YLVCKKPKPHQSTPRHQKPLTLAYDGDLDM) the chain is on the cytoplasmic side.

It localises to the membrane. This is Thrombospondin type-1 domain-containing protein 7B from Mus musculus (Mouse).